Reading from the N-terminus, the 570-residue chain is MGEKPDKYEILQDLMRRRGFAWGSFEIYGGSRGFYDYGPLGATIKRKIERKIREAFQREGFFELETPDITPEKVFIASGHVEKFVDPLVECKKCGARFRADHLVEEALGIDTEGMSAEHLTQLIREHDIRCPECGGELSDVWYFNLMFETRIGPYGDQKGYLRPETAQGIFVNFRRLNAFARNKLPFGVFQIGKAYRNEISPRQGMLRLREFTQAEAEIFFNPNETEHPHFDEVKDEKLRLYPIEHQLKNLSMIELTAEEAVKKGYIMNTFFAYYMVMVKRVLLDIGIPEDKIRFRQQLPEERAHYSRDTWDAEIHSERFGWVECVGIANRGDYDLSRHMRESGADLTVLIHYDEPKIVKKLEVSLNMKRVGPKLKKDAKRINELIKGWGEEKKRELVELLEKEGKVTIEGYELEKDDFIIREVEEKITGEKIVPHVLEPSFGIDRPFYLLLENSLVIEEDRTYLRIKKDMAPIEVAVLPLVAKEPLKSIAYDIFRTLQKEGFIAVYDEKDTVGRRYMRYDEIGTPYCVTVDNQTPEDGTVTIRDRDTREQIRVKIEELPKKLRELIFES.

The substrate site is built by Arg-99 and Glu-165. Residues 197-199 (RNE), 207-212 (LRLREF), 324-325 (EC), and 443-446 (GIDR) each bind ATP. 212–216 (FTQAE) is a substrate binding site. A substrate-binding site is contributed by 439–443 (EPSFG).

This sequence belongs to the class-II aminoacyl-tRNA synthetase family.

The protein resides in the cytoplasm. It carries out the reaction tRNA(Gly) + glycine + ATP = glycyl-tRNA(Gly) + AMP + diphosphate. Functionally, catalyzes the attachment of glycine to tRNA(Gly). In Thermococcus kodakarensis (strain ATCC BAA-918 / JCM 12380 / KOD1) (Pyrococcus kodakaraensis (strain KOD1)), this protein is Glycine--tRNA ligase.